We begin with the raw amino-acid sequence, 115 residues long: Large ribosomal subunit protein bL19 (115 aa).

It belongs to the bacterial ribosomal protein bL19 family.

Functionally, this protein is located at the 30S-50S ribosomal subunit interface and may play a role in the structure and function of the aminoacyl-tRNA binding site. In Lacticaseibacillus casei (strain BL23) (Lactobacillus casei), this protein is Large ribosomal subunit protein bL19.